The following is a 136-amino-acid chain: Small ribosomal subunit protein bS6 (136 aa).

The segment covering glutamate 97–glutamate 128 has biased composition (basic and acidic residues). A disordered region spans residues glutamate 97–glutamate 136.

It belongs to the bacterial ribosomal protein bS6 family.

Its function is as follows. Binds together with bS18 to 16S ribosomal RNA. This chain is Small ribosomal subunit protein bS6, found in Bartonella bacilliformis (strain ATCC 35685 / KC583 / Herrer 020/F12,63).